Here is a 401-residue protein sequence, read N- to C-terminus: G2/mitotic-specific cyclin-B1 (401 aa).

The protein belongs to the cyclin family. Cyclin AB subfamily. As to quaternary structure, interacts with the CDK1 protein kinase to form a serine/threonine kinase holoenzyme complex also known as maturation promoting factor (MPF). The cyclin subunit imparts substrate specificity to the complex.

In terms of biological role, essential for the control of the cell cycle at the G2/M (mitosis) transition. The polypeptide is G2/mitotic-specific cyclin-B1 (ccnb1) (Oryzias luzonensis (Luzon ricefish)).